The chain runs to 29 residues: Dermaseptin-J6 (29 aa).

V29 carries the valine amide modification.

Expressed by the skin glands.

The protein resides in the secreted. Has antimicrobial activity. The polypeptide is Dermaseptin-J6 (Phasmahyla jandaia (Jandaia leaf frog)).